A 143-amino-acid chain; its full sequence is Sarcoplasmic/endoplasmic reticulum calcium ATPase (143 aa).

This sequence belongs to the cation transport ATPase (P-type) (TC 3.A.3) family. Type IIA subfamily.

The protein resides in the endoplasmic reticulum membrane. It localises to the sarcoplasmic reticulum membrane. It catalyses the reaction Ca(2+)(in) + ATP + H2O = Ca(2+)(out) + ADP + phosphate + H(+). In terms of biological role, this magnesium-dependent enzyme catalyzes the hydrolysis of ATP coupled with the transport of calcium. Transports calcium ions from the cytosol into the sarcoplasmic/endoplasmic reticulum lumen. Contributes to calcium sequestration involved in muscular excitation/contraction. The polypeptide is Sarcoplasmic/endoplasmic reticulum calcium ATPase (Chionoecetes opilio (Atlantic snow crab)).